The following is a 116-amino-acid chain: Large ribosomal subunit protein uL18 (116 aa).

The protein belongs to the universal ribosomal protein uL18 family. Part of the 50S ribosomal subunit; part of the 5S rRNA/L5/L18/L25 subcomplex. Contacts the 5S and 23S rRNAs.

Its function is as follows. This is one of the proteins that bind and probably mediate the attachment of the 5S RNA into the large ribosomal subunit, where it forms part of the central protuberance. This is Large ribosomal subunit protein uL18 from Mycoplasma capricolum subsp. capricolum (strain California kid / ATCC 27343 / NCTC 10154).